Here is a 95-residue protein sequence, read N- to C-terminus: Aspartyl/glutamyl-tRNA(Asn/Gln) amidotransferase subunit C (95 aa).

The protein belongs to the GatC family. As to quaternary structure, heterotrimer of A, B and C subunits.

It carries out the reaction L-glutamyl-tRNA(Gln) + L-glutamine + ATP + H2O = L-glutaminyl-tRNA(Gln) + L-glutamate + ADP + phosphate + H(+). The catalysed reaction is L-aspartyl-tRNA(Asn) + L-glutamine + ATP + H2O = L-asparaginyl-tRNA(Asn) + L-glutamate + ADP + phosphate + 2 H(+). In terms of biological role, allows the formation of correctly charged Asn-tRNA(Asn) or Gln-tRNA(Gln) through the transamidation of misacylated Asp-tRNA(Asn) or Glu-tRNA(Gln) in organisms which lack either or both of asparaginyl-tRNA or glutaminyl-tRNA synthetases. The reaction takes place in the presence of glutamine and ATP through an activated phospho-Asp-tRNA(Asn) or phospho-Glu-tRNA(Gln). This Rhizorhabdus wittichii (strain DSM 6014 / CCUG 31198 / JCM 15750 / NBRC 105917 / EY 4224 / RW1) (Sphingomonas wittichii) protein is Aspartyl/glutamyl-tRNA(Asn/Gln) amidotransferase subunit C.